A 172-amino-acid chain; its full sequence is Photosystem I assembly protein Ycf3 (172 aa).

TPR repeat units follow at residues 35 to 68 (AFSYYRDGMSAQSEGEYAEALENYYEALRLEEDP), 72 to 105 (SYILYNIGLIYASNGEYVKALEYYHQALDLNSQL), and 120 to 153 (GVKASEKKELDLARTLFDKAAEYWKQAIRLSPNN).

The protein belongs to the Ycf3 family.

The protein localises to the plastid. Its subcellular location is the chloroplast thylakoid membrane. Functionally, essential for the assembly of the photosystem I (PSI) complex. May act as a chaperone-like factor to guide the assembly of the PSI subunits. The polypeptide is Photosystem I assembly protein Ycf3 (Guillardia theta (Cryptophyte)).